Here is a 443-residue protein sequence, read N- to C-terminus: Sensor histidine protein kinase HK06 (443 aa).

Helical transmembrane passes span 16 to 36 (FAIL…TFPF) and 140 to 160 (ILLL…FVFS). One can recognise an HAMP domain in the interval 165-217 (KRLLNPLFYISEVTSKMQDLDDNIRFDESRKDEVGEVGKQINGMYEHLLKVIH). In terms of domain architecture, Histidine kinase spans 239 to 443 (GASHELKTPL…EHGMEFKISL (205 aa)). Phosphohistidine; by autocatalysis is present on His242.

Its subcellular location is the cell membrane. The enzyme catalyses ATP + protein L-histidine = ADP + protein N-phospho-L-histidine.. Member of the two-component regulatory system HK06/RR06 involved in regulation of target genes, including choline-binding protein CbpA. Has been shown in one study to not be required for regulation of expression of choline-binding protein CbpA. In Streptococcus pneumoniae serotype 2 (strain D39 / NCTC 7466), this protein is Sensor histidine protein kinase HK06.